The following is a 360-amino-acid chain: Sphingolipid delta(4)-desaturase (360 aa).

3 helical membrane passes run 67–87, 89–109, and 125–145; these read AVVL…VLSF, FLAL…LCIH, and LFAI…FQPY. Residues 109 to 113 carry the Histidine box-1 motif; sequence HELSH. The Histidine box-2 signature appears at 146-150; it reads HQLHH. Helical transmembrane passes span 170–190, 202–222, and 228–248; these read VLSS…FYAL, FIHL…IKFG, and WYLI…GHFI. The Histidine box-3 signature appears at 288 to 292; it reads HNEHH.

It belongs to the fatty acid desaturase type 1 family. DEGS subfamily.

It localises to the membrane. It carries out the reaction an N-acylsphinganine + 2 Fe(II)-[cytochrome b5] + O2 + 2 H(+) = an N-acylsphing-4-enine + 2 Fe(III)-[cytochrome b5] + 2 H2O. It functions in the pathway lipid metabolism; sphingolipid metabolism. Its function is as follows. Delta(4)-fatty-acid desaturase which introduces a double bond at the 4-position in the long-chain base (LCB) of ceramides. Required for the formation of the monounsaturated sphingoid base (E)-sphing-4-enine during glucosylceramide (GluCer) biosynthesis. This is Sphingolipid delta(4)-desaturase from Komagataella phaffii (strain GS115 / ATCC 20864) (Yeast).